A 319-amino-acid chain; its full sequence is MQNRNISYWIKKCVIQSISIVILMKIIAWPSISEAYPIFAQQAYEDPREATGRIVCANCHLAKKPVDIEVPQSVLPDTVFEAVVKIPYDMQIKQVLANGKKGALNVGAVLILPKGFELAPADRIPPEMKEKIGNLYFQPYSSDKKNILVIGPVPGKKYSEMVFPILSPDPAVNKEANFLKYPIYLGANRGRGQIYPDGSKSNNTVYNASAAGTVSKIFRKEKGGYEITIDTQDGRQIVDIVPAGPELIISEGELIKADQPLTNNPNVGGFGQGDAEIVLQDPLRVQSLLVFFVSVTLAQIFLVLKKKQFEKVQLAEMNF.

The first 35 residues, 1-35 (MQNRNISYWIKKCVIQSISIVILMKIIAWPSISEA), serve as a signal peptide directing secretion. 4 residues coordinate heme: tyrosine 36, cysteine 56, cysteine 59, and histidine 60. Residues 285 to 305 (VQSLLVFFVSVTLAQIFLVLK) form a helical membrane-spanning segment.

Belongs to the cytochrome f family. The 4 large subunits of the cytochrome b6-f complex are cytochrome b6, subunit IV (17 kDa polypeptide, petD), cytochrome f and the Rieske protein, while the 4 small subunits are PetG, PetL, PetM and PetN. The complex functions as a dimer. Heme is required as a cofactor.

It is found in the plastid. It localises to the chloroplast thylakoid membrane. Functionally, component of the cytochrome b6-f complex, which mediates electron transfer between photosystem II (PSII) and photosystem I (PSI), cyclic electron flow around PSI, and state transitions. The polypeptide is Cytochrome f (Physcomitrium patens (Spreading-leaved earth moss)).